Here is a 314-residue protein sequence, read N- to C-terminus: Transcriptional regulatory protein GlnL (314 aa).

A Response regulatory domain is found at 2 to 118 (RFFIADDDRA…EIVTVLQKVK (117 aa)). Position 54 is a 4-aspartylphosphate (Asp54).

In terms of processing, phosphorylated by GlnK.

It is found in the cytoplasm. In terms of biological role, member of the two-component regulatory system GlnL/GlnK that positively regulates the expression of the glsA-glnT operon in response to glutamine. GlnL binds the promoter region of glsA-glnT in vitro. In Bacillus subtilis (strain 168), this protein is Transcriptional regulatory protein GlnL (glnL).